A 224-amino-acid chain; its full sequence is Precorrin-2 dehydrogenase (224 aa).

NAD(+) is bound by residues 26–27 (SV) and 47–50 (EFSQ).

The protein belongs to the precorrin-2 dehydrogenase / sirohydrochlorin ferrochelatase family. In terms of assembly, homodimer.

The enzyme catalyses precorrin-2 + NAD(+) = sirohydrochlorin + NADH + 2 H(+). It participates in porphyrin-containing compound metabolism; siroheme biosynthesis; sirohydrochlorin from precorrin-2: step 1/1. In terms of biological role, involved in the archaeal biosynthesis of heme. Catalyzes the oxiation of precorrin-2 into sirohydroclorin. This Methanosarcina barkeri (strain Fusaro / DSM 804) protein is Precorrin-2 dehydrogenase.